The primary structure comprises 265 residues: Cytoplasmic envelopment protein 1 (265 aa).

Belongs to the herpesviridae cytoplasmic envelopment protein 1 family.

It is found in the virion. It localises to the virion tegument. The protein localises to the host cytoplasm. Its subcellular location is the host Golgi apparatus. Its function is as follows. Plays a critical role in cytoplasmic virus egress. Participates in the final step of tegumentation and envelope acquisition within the host cytoplasm. The protein is Cytoplasmic envelopment protein 1 (42) of Saimiriine herpesvirus 2 (strain 11) (SaHV-2).